A 362-amino-acid chain; its full sequence is Mortality factor 4-like protein 1 (362 aa).

One can recognise a Tudor-knot domain in the interval 12–51 (QEGERVLCFHGPLLYEAKCVKVAIKDKQVKYFIHYSGWNK). Residues 26–62 (YEAKCVKVAIKDKQVKYFIHYSGWNKKSAVRPRRSEK) form an interaction with KAT8 region. The segment at 113-182 (RELQKANQEQ…RKKRARVDPT (70 aa)) is disordered. A sufficient for interaction with SIN3A region spans residues 133–266 (PGKKTSGLQQ…VAGIKEYFNV (134 aa)). The Nuclear localization signal signature appears at 135–146 (KKTSGLQQKNVE). Lys143 carries the N6-acetyllysine modification. An interaction with RB1-1 region spans residues 164 to 230 (STSETPQPPR…FYLPAKKNVD (67 aa)). Residues 188-342 (TFMNRVEVKV…FLKYLAKNSA (155 aa)) form a sufficient for interaction with PHF12 region. The MRG domain maps to 191–362 (NRVEVKVKIP…APPEYHRKAV (172 aa)). An interaction with RB1-2 region spans residues 323-344 (LALLLNYLHDFLKYLAKNSATL).

In terms of assembly, component of the NuA4 histone acetyltransferase complex which contains the catalytic subunit KAT5/TIP60 and the subunits EP400, TRRAP/PAF400, BRD8/SMAP, EPC1, DMAP1/DNMAP1, RUVBL1/TIP49, RUVBL2, ING3, actin, ACTL6A/BAF53A, MORF4L1/MRG15, MORF4L2/MRGX, MRGBP, YEATS4/GAS41, VPS72/YL1 and MEAF6. The NuA4 complex interacts with MYC and the adenovirus E1A protein. MORF4L1 may also participate in the formation of NuA4 related complexes which lack the KAT5/TIP60 catalytic subunit, but which include the SWI/SNF related protein SRCAP. Component of the mSin3A histone deacetylase complex, which includes SIN3A, HDAC2, ARID4B, MORF4L1, RBBP4/RbAp48, and RBBP7/RbAp46. May also interact with PHF12 and one or more as yet undefined members of the TLE (transducin-like enhancer of split) family of transcriptional repressors. Component of the SIN3B complex, which includes SIN3B, HDAC2 or HDAC1, PHF12 and MORF4L1. Interacts with RB1 and KAT8. Interacts with the N-terminus of MRFAP1. Found in a complex composed of MORF4L1, MRFAP1 and RB1. Interacts with the entire BRCA complex, which contains BRCA1, PALB2, BRCA2 and RAD51. Interacts with PALB2. Forms a complex with MSL1 and NUPR1.

It is found in the nucleus. Its function is as follows. Component of the NuA4 histone acetyltransferase (HAT) complex which is involved in transcriptional activation of select genes principally by acetylation of nucleosomal histones H4 and H2A. This modification may both alter nucleosome - DNA interactions and promote interaction of the modified histones with other proteins which positively regulate transcription. This complex may be required for the activation of transcriptional programs associated with oncogene and proto-oncogene mediated growth induction, tumor suppressor mediated growth arrest and replicative senescence, apoptosis, and DNA repair. The NuA4 complex ATPase and helicase activities seem to be, at least in part, contributed by the association of RUVBL1 and RUVBL2 with EP400. NuA4 may also play a direct role in DNA repair when directly recruited to sites of DNA damage. As part of the SIN3B complex represses transcription and counteracts the histone acetyltransferase activity of EP300 through the recognition H3K27ac marks by PHF12 and the activity of the histone deacetylase HDAC2. SIN3B complex is recruited downstream of the constitutively active genes transcriptional start sites through interaction with histones and mitigates histone acetylation and RNA polymerase II progression within transcribed regions contributing to the regulation of transcription. Required for homologous recombination repair (HRR) and resistance to mitomycin C (MMC). Involved in the localization of PALB2, BRCA2 and RAD51, but not BRCA1, to DNA-damage foci. The sequence is that of Mortality factor 4-like protein 1 from Homo sapiens (Human).